Here is a 578-residue protein sequence, read N- to C-terminus: Triokinase/FMN cyclase (578 aa).

In terms of domain architecture, DhaK spans 9 to 336 (SVAGCADDAL…IDAETTASAW (328 aa)). Dihydroxyacetone-binding positions include 56–59 (GSGH), K109, and D114. Residue H221 is the Tele-hemiaminal-histidine intermediate of the active site. Residue S350 is modified to Phosphoserine. A DhaL domain is found at 372–571 (KQMVLVLEWV…AAAILRAILE (200 aa)). ATP-binding positions include 401–404 (DGDC), 446–447 (SS), G486, and 494–495 (TM). Residues S511 and S545 each carry the phosphoserine modification. 556–558 (DPG) lines the ATP pocket.

As to quaternary structure, homodimer. Interacts with IFIH1 (via the CARD domains), the interaction is inhibited by viral infection. Requires Mg(2+) as cofactor. It depends on Mn(2+) as a cofactor. The cofactor is Co(2+).

It catalyses the reaction dihydroxyacetone + ATP = dihydroxyacetone phosphate + ADP + H(+). The enzyme catalyses D-glyceraldehyde + ATP = D-glyceraldehyde 3-phosphate + ADP + H(+). The catalysed reaction is FAD = riboflavin cyclic-4',5'-phosphate + AMP + H(+). With respect to regulation, each activity is inhibited by the substrate(s) of the other. Its function is as follows. Catalyzes both the phosphorylation of dihydroxyacetone and of glyceraldehyde, and the splitting of ribonucleoside diphosphate-X compounds among which FAD is the best substrate. Represses IFIH1-mediated cellular antiviral response. The protein is Triokinase/FMN cyclase (TKFC) of Bos taurus (Bovine).